We begin with the raw amino-acid sequence, 312 residues long: MDKEWLEVCIYTSSEALEAISGILYNTGVKGVSIEDPKDIEFKKKHPGDWDYFDETLLKVKDTAIVKGYYKEDDKFNEYLDYIKKSVSNLDQFGIDKGKGLVEVHKVNEEDWENNWKKYYKPTKVSNKIVIKPIWENYDKKQEEIIVELDPGMAFGTGTHETTRMCINALEKHIKEDRTVFDIGCGSGILSIAAAKLGAKHVIGVDLDPVAVKSSKENIKYNNLDNIEILEGNLMEVVEGRANIVVANIIADVIIFLTEGVKAFIEKDGYFIASGIINSRKEDVIKKLEETGFVIEEVREEGEWVCIVSKIN.

The S-adenosyl-L-methionine site is built by Thr-163, Gly-184, Asp-206, and Asn-248.

The protein belongs to the methyltransferase superfamily. PrmA family.

The protein localises to the cytoplasm. It carries out the reaction L-lysyl-[protein] + 3 S-adenosyl-L-methionine = N(6),N(6),N(6)-trimethyl-L-lysyl-[protein] + 3 S-adenosyl-L-homocysteine + 3 H(+). Methylates ribosomal protein L11. The protein is Ribosomal protein L11 methyltransferase of Clostridium botulinum (strain 657 / Type Ba4).